The primary structure comprises 416 residues: CinA-like protein (416 aa).

It belongs to the CinA family.

In Rippkaea orientalis (strain PCC 8801 / RF-1) (Cyanothece sp. (strain PCC 8801)), this protein is CinA-like protein.